Reading from the N-terminus, the 468-residue chain is Effector protein hopD2 (468 aa).

Polar residues predominate over residues 1-20; it reads MNPLQPIQHSITNSQMSGGQ. Residues 1 to 35 are disordered; it reads MNPLQPIQHSITNSQMSGGQQLEAEGSQAHNSYSH. The 326-residue stretch at 143–468 folds into the Tyrosine-protein phosphatase domain; that stretch reads DASSPPSAND…TQWRAKIALE (326 aa). Cys-378 acts as the Phosphocysteine intermediate in catalysis.

Interacts with EFR and FLS2 (via the kinase and cytoplasmic domains).

It is found in the secreted. The catalysed reaction is O-phospho-L-tyrosyl-[protein] + H2O = L-tyrosyl-[protein] + phosphate. With respect to regulation, inhibited by sodium orthovanadate. Effector showing tyrosine-phosphatase activity required for host defense suppression. Functions inside plant cells causing suppression of HR (hypersensitive response), PR1 gene expression and oxidative burst probably by interfering with a MAPK (mitogen-activated protein kinase) pathway. MAPK cascades are known to activate defense-related transcription factors. Inhibits plant pattern-recognition receptors (PRRs) activation. The protein is Effector protein hopD2 (hopD2) of Pseudomonas syringae pv. tomato (strain ATCC BAA-871 / DC3000).